Consider the following 387-residue polypeptide: MTTSSPLIAIVAGEISGDILGAGLIKALKVHYPNARFIGVAGEKMLKEGCETLFDMEKLAVMGLAEVVRHLPRLLKRRKQVIDTMLALKPDIFIGIDAPDFNLGVEEKLKAQGIKTIHYVSPSVWAWRQNRVHKIASATDLVLAFLPFEKAFYDRFNVPCRFIGHTMADAIALQPNRQEACRLLQLDENQHYVAILVGSRGSEVNFLSEPFLKTAQLLKAQYPDVQFLVPLVNEKRREQFEAIKAQVAPELEVITLAGNARAAMMVAEATLLASGTAALEAMLCKSPMVVGYKMKPLTYWLAKRLVKTDYISLPNLLANEPLVPELIQADCSPENLAKHLSLYLSQMPEDVAKKNALKQRFMELHQYIQCDADAQAAQAVVDVLNRE.

The protein belongs to the LpxB family.

The enzyme catalyses a lipid X + a UDP-2-N,3-O-bis[(3R)-3-hydroxyacyl]-alpha-D-glucosamine = a lipid A disaccharide + UDP + H(+). It participates in bacterial outer membrane biogenesis; LPS lipid A biosynthesis. Condensation of UDP-2,3-diacylglucosamine and 2,3-diacylglucosamine-1-phosphate to form lipid A disaccharide, a precursor of lipid A, a phosphorylated glycolipid that anchors the lipopolysaccharide to the outer membrane of the cell. In Glaesserella parasuis serovar 5 (strain SH0165) (Haemophilus parasuis), this protein is Lipid-A-disaccharide synthase.